The primary structure comprises 164 residues: UPF0114 protein KPN78578_33570 (164 aa).

4 helical membrane passes run 15–35 (LLAP…IKFF), 53–73 (MILT…LVMV), 109–126 (VAAS…RVFM), and 136–156 (LMWY…MGYL).

It belongs to the UPF0114 family.

The protein resides in the cell membrane. The chain is UPF0114 protein KPN78578_33570 from Klebsiella pneumoniae subsp. pneumoniae (strain ATCC 700721 / MGH 78578).